The chain runs to 224 residues: 7-cyano-7-deazaguanine synthase (224 aa).

ATP is bound at residue 12-22 (LSGGLDSSTVT). The Zn(2+) site is built by cysteine 193, cysteine 201, cysteine 204, and cysteine 207.

This sequence belongs to the QueC family. The cofactor is Zn(2+).

It catalyses the reaction 7-carboxy-7-deazaguanine + NH4(+) + ATP = 7-cyano-7-deazaguanine + ADP + phosphate + H2O + H(+). Its pathway is purine metabolism; 7-cyano-7-deazaguanine biosynthesis. Functionally, catalyzes the ATP-dependent conversion of 7-carboxy-7-deazaguanine (CDG) to 7-cyano-7-deazaguanine (preQ(0)). This chain is 7-cyano-7-deazaguanine synthase, found in Prochlorococcus marinus (strain MIT 9515).